The primary structure comprises 286 residues: Bifunctional protein FolD (286 aa).

Residues 165-167 (GRS), S190, and V231 each bind NADP(+).

It belongs to the tetrahydrofolate dehydrogenase/cyclohydrolase family. Homodimer.

The enzyme catalyses (6R)-5,10-methylene-5,6,7,8-tetrahydrofolate + NADP(+) = (6R)-5,10-methenyltetrahydrofolate + NADPH. It catalyses the reaction (6R)-5,10-methenyltetrahydrofolate + H2O = (6R)-10-formyltetrahydrofolate + H(+). It participates in one-carbon metabolism; tetrahydrofolate interconversion. Its function is as follows. Catalyzes the oxidation of 5,10-methylenetetrahydrofolate to 5,10-methenyltetrahydrofolate and then the hydrolysis of 5,10-methenyltetrahydrofolate to 10-formyltetrahydrofolate. The chain is Bifunctional protein FolD from Bacillus cereus (strain ATCC 14579 / DSM 31 / CCUG 7414 / JCM 2152 / NBRC 15305 / NCIMB 9373 / NCTC 2599 / NRRL B-3711).